The sequence spans 278 residues: SPX domain-containing protein 2 (278 aa).

Residues 1 to 162 (MKFGKSLSSQ…GSMIRLPFVQ (162 aa)) form the SPX domain. 2 disordered regions span residues 191 to 242 (PTNE…KSTV) and 255 to 278 (GSSTVSVFSLPPLHGSNGQDEPGR).

Interacts (via SPX domain) with PHR2 (via C-terminus). Interacts with RLI1 in the nucleus to prevents its positive regulation of leaf inclination during phosphate (Pi) starvation.

The protein localises to the nucleus. Functionally, inhibits PHR2 DNA-binding activity via a phosphate (Pi)-dependent protein interaction. Together with SPX1, plays a negative role in the regulation of leaf inclination by preventing RLI1 transcription factor activity in Pi depleted conditions. This is SPX domain-containing protein 2 from Oryza sativa subsp. indica (Rice).